The chain runs to 601 residues: Protein nubbin (601 aa).

Basic and acidic residues predominate over residues 1 to 25 (MVMSELRWHTASPEDNKNSLKRDLL). Disordered stretches follow at residues 1–32 (MVMSELRWHTASPEDNKNSLKRDLLKSTPTSA), 49–94 (SRSP…AKRQ), 121–158 (KQEEDYDDANGGALNLTSDNSRHSTQSPSNSVKSATAS), 351–425 (PASS…ETTD), and 581–601 (INPSLDSPTGADDDESSYMMH). Over residues 49–68 (SRSPSPLQSNASDCDDNNSS) the composition is skewed to low complexity. The span at 135 to 157 (NLTSDNSRHSTQSPSNSVKSATA) shows a compositional bias: polar residues. Over residues 384–415 (TPSTPTSGTQMSQGTTTPQPKTVASAAAARAA) the composition is skewed to low complexity. A POU-specific domain is found at 421-495 (EETTDLEELE…LLQKWLDDAD (75 aa)). A DNA-binding region (homeobox) is located at residues 523–582 (RRKKRTSIETTIRGALEKAFLANQKPTSEEITQLADRLSMEKEVVRVWFCNRRQKEKRIN). A compositionally biased stretch (acidic residues) spans 591 to 601 (ADDDESSYMMH).

The protein belongs to the POU transcription factor family. Class-2 subfamily. In terms of tissue distribution, initial expression in cellular blastoderm stage, then in ectodermal stripes during germband extension. Broad expression in the neuroectoderm followed by limitation to discrete subsets of CNS cells, and expression in specific PNS neurons and support cells.

It is found in the nucleus. In terms of biological role, DNA-binding regulatory protein implicated in early development. Involved in neuronal cell fate decision. Repressed directly or indirectly by the BX-C homeotic proteins. The polypeptide is Protein nubbin (nub) (Drosophila melanogaster (Fruit fly)).